Here is a 114-residue protein sequence, read N- to C-terminus: Nucleoid-associated protein slr1847 (114 aa).

Belongs to the YbaB/EbfC family. Homodimer.

It localises to the cytoplasm. The protein localises to the nucleoid. Functionally, binds to DNA and alters its conformation. May be involved in regulation of gene expression, nucleoid organization and DNA protection. The protein is Nucleoid-associated protein slr1847 of Synechocystis sp. (strain ATCC 27184 / PCC 6803 / Kazusa).